Here is a 62-residue protein sequence, read N- to C-terminus: U10-buthitoxin-Hj1a (62 aa).

An N-terminal signal peptide occupies residues 1–22 (MQKIFIILVLFCILKFNVDVEG). 3 disulfides stabilise this stretch: cysteine 28-cysteine 46, cysteine 33-cysteine 59, and cysteine 37-cysteine 61.

This sequence belongs to the short scorpion toxin superfamily. Potassium channel inhibitor family. Alpha-KTx 23 subfamily. Expressed by the venom gland.

It is found in the secreted. Functionally, may block potassium channels. This chain is U10-buthitoxin-Hj1a, found in Hottentotta judaicus (Black scorpion).